The chain runs to 2568 residues: Highly reducing polyketide synthase resH (2568 aa).

The region spanning 9-437 (PEPIAIVGMA…GANAHAILDA (429 aa)) is the Ketosynthase family 3 (KS3) domain. Residues C184, H319, and H359 each act as for beta-ketoacyl synthase activity in the active site. In terms of domain architecture, Malonyl-CoA:ACP transacylase (MAT) spans 549–877 (FIFTGQGAQW…KLAGSLFLSG (329 aa)). Residues 942-1081 (HDLLGSRLPG…TNDQLLWPDD (140 aa)) are N-terminal hotdog fold. Residues 942-1244 (HDLLGSRLPG…FSSLETASSD (303 aa)) form the PKS/mFAS DH domain. Catalysis depends on H974, which acts as the Proton acceptor; for dehydratase activity. Residues 1091 to 1244 (NKDSYDRRWY…FSSLETASSD (154 aa)) are C-terminal hotdog fold. D1156 acts as the Proton donor; for dehydratase activity in catalysis. Residues 1295–1595 (VTRLAIRSSA…SGADVVLDDY (301 aa)) are methyltransferase (CMet) domain. The Enoyl reductase (ER) domain maps to 1853–2154 (GRLDSFYFKE…QEDSVGLAVL (302 aa)). A Ketoreductase (KR) domain is found at 2177 to 2357 (ASYLLIGCLG…QATSIALGMI (181 aa)). One can recognise a Carrier domain in the interval 2485-2563 (AVKSAILGLI…GLADQVVSLA (79 aa)). O-(pantetheine 4'-phosphoryl)serine is present on S2522.

It depends on pantetheine 4'-phosphate as a cofactor.

It functions in the pathway antifungal biosynthesis. Highly reducing polyketide synthase; part of the gene cluster that mediates the biosynthesis of the tetrahydropyranyl antifungal agent restricticin that acts as an inhibitor of CYP51 and blocks the ergosterol biosynthesis. The highly reducing polyketide synthase resH, the short chain dehydrogenase resG, the cyclase resF, the FAD-dependent monooxygenase resA and the enoylreductase resD are required to generate the first stable intermediate desmethylrestrictinol. ResH with resD biosynthesize the first polyketide chain intermediate that is reduced by resG, followed by epoxidation by resA before 6-endo cyclization via epoxide opening by resF leads to desmethylrestrictinol. The methyltransferase resE then catalyzes the C4 O-methylation of desmethylrestrictinol to produce restrictinol, and the nonribosomal peptide synthetase resC catalyzes the C3 esterification of restrictinol with glycine that leads to restricticin. The protein is Highly reducing polyketide synthase resH of Aspergillus sclerotiorum.